A 94-amino-acid polypeptide reads, in one-letter code: 2S albumin-like cysteine protease inhibitor (94 aa).

Disulfide bonds link Cys-12–Cys-35, Cys-36–Cys-82, and Cys-48–Cys-89.

It belongs to the 2S seed storage albumins family. Expressed in seeds (at protein level).

Functionally, cysteine protease inhibitor that likely functions in defense against insects by inhibiting cysteine proteases in the midgut of herbivore insects such as C.maculatus. Selectively inhibits cathepsin L, as well as papain, ficin and bromelain with lower efficiency. Shows antitumor activity, inhibiting the growth of prostate cancer cell lines PC3 and DU145, and the gastric cancer cell line Hs746T. No activity against cathepsin B or serine proteases (trypsin, human plasma kallikrein and elastase). The protein is 2S albumin-like cysteine protease inhibitor of Araucaria angustifolia (Brazilian pine tree).